Consider the following 165-residue polypeptide: Small ribosomal subunit protein uS5 (165 aa).

An S5 DRBM domain is found at 10–73; the sequence is QIEKLISLNR…TSARKNLRFV (64 aa).

Belongs to the universal ribosomal protein uS5 family. Part of the 30S ribosomal subunit. Contacts proteins S4 and S8.

With S4 and S12 plays an important role in translational accuracy. Its function is as follows. Located at the back of the 30S subunit body where it stabilizes the conformation of the head with respect to the body. The protein is Small ribosomal subunit protein uS5 of Borreliella afzelii (strain PKo) (Borrelia afzelii).